The following is a 567-amino-acid chain: Serine/threonine-protein kinase SSN3 (567 aa).

The Protein kinase domain occupies Y68 to F470. Residue I74 to V82 coordinates ATP. The segment at R88–R179 is disordered. The span at S90 to S101 shows a compositional bias: low complexity. Composition is skewed to polar residues over residues L102–G122 and P133–T150. The span at G167–R179 shows a compositional bias: basic and acidic residues. K190 serves as a coordination point for ATP. D293 acts as the Proton acceptor in catalysis. The span at A546–S556 shows a compositional bias: low complexity. The disordered stretch occupies residues A546–K567.

It belongs to the protein kinase superfamily. CMGC Ser/Thr protein kinase family. CDC2/CDKX subfamily. In terms of assembly, component of the SRB8-11 complex, a regulatory module of the Mediator complex. Mg(2+) serves as cofactor.

The protein resides in the nucleus. The catalysed reaction is L-seryl-[protein] + ATP = O-phospho-L-seryl-[protein] + ADP + H(+). It carries out the reaction L-threonyl-[protein] + ATP = O-phospho-L-threonyl-[protein] + ADP + H(+). The enzyme catalyses [DNA-directed RNA polymerase] + ATP = phospho-[DNA-directed RNA polymerase] + ADP + H(+). Its function is as follows. Component of the SRB8-11 complex. The SRB8-11 complex is a regulatory module of the Mediator complex which is itself involved in regulation of basal and activated RNA polymerase II-dependent transcription. The SRB8-11 complex may be involved in the transcriptional repression of a subset of genes regulated by Mediator. It may inhibit the association of the Mediator complex with RNA polymerase II to form the holoenzyme complex. The SRB8-11 complex phosphorylates the C-terminal domain (CTD) of the largest subunit of RNA polymerase II. In Candida glabrata (strain ATCC 2001 / BCRC 20586 / JCM 3761 / NBRC 0622 / NRRL Y-65 / CBS 138) (Yeast), this protein is Serine/threonine-protein kinase SSN3 (SSN3).